Reading from the N-terminus, the 265-residue chain is Methylthioribulose-1-phosphate dehydratase (265 aa).

Cys-116 contacts substrate. His-134 and His-136 together coordinate Zn(2+). Residue Glu-159 is the Proton donor/acceptor of the active site. Residue His-224 participates in Zn(2+) binding.

Belongs to the aldolase class II family. MtnB subfamily. It depends on Zn(2+) as a cofactor.

It is found in the cytoplasm. The enzyme catalyses 5-(methylsulfanyl)-D-ribulose 1-phosphate = 5-methylsulfanyl-2,3-dioxopentyl phosphate + H2O. Its pathway is amino-acid biosynthesis; L-methionine biosynthesis via salvage pathway; L-methionine from S-methyl-5-thio-alpha-D-ribose 1-phosphate: step 2/6. In terms of biological role, catalyzes the dehydration of methylthioribulose-1-phosphate (MTRu-1-P) into 2,3-diketo-5-methylthiopentyl-1-phosphate (DK-MTP-1-P). This is Methylthioribulose-1-phosphate dehydratase from Debaryomyces hansenii (strain ATCC 36239 / CBS 767 / BCRC 21394 / JCM 1990 / NBRC 0083 / IGC 2968) (Yeast).